The chain runs to 239 residues: Lipid transferase CIDEC (239 aa).

The interval 1–35 (MDYAMKSLSLLYPRSLSRHVAVSTAVVTQQLVSKP) is required for liquid-liquid phase separation (LLPS). The 78-residue stretch at 41 to 118 (RARPCRVSTA…VLLKGQKWKP (78 aa)) folds into the CIDE-N domain. The RKKR polybasic motif motif lies at 123-126 (RKKR).

Belongs to the CIDE family. Homodimer. Homooligomer; undergoes liquid-liquid phase separation (LLPS) via its N-terminus, facilitating lipid droplet fusion, occurs at the lipid droplet contact sites. Interacts with CIDEA. Interacts with PLIN1. Interacts with NFAT5; this interaction is direct and retains NFAT5 in the cytoplasm. Interacts with CEBPB. Interacts with isoform CLSTN3beta of CLSTN3; inhibiting the lipid transferase activity of CIDEC. In terms of processing, ubiquitinated and targeted to proteasomal degradation, resulting in a short half-life (about 15 minutes in 3T3-L1 cells). Protein stability depends on triaclyglycerol synthesis, fatty acid availability and lipid droplet formation. Expressed almost exclusively in adipose tissue, including subcutaneous and epididymal white adipose tissue (at protein level). Although abundantly present in brown adipose tissue at the mRNA level, the protein is almost undetectable in this tissue, or at moderate levels. Expressed in the mammary gland, in stromal adipose tissue, but becomes undetectable at the end of pregnancy and during lactation (at protein level). Expressed at low levels in skeletal muscle and heart.

It localises to the lipid droplet. The protein localises to the endoplasmic reticulum. The protein resides in the nucleus. It catalyses the reaction a triacyl-sn-glycerol(in) = a triacyl-sn-glycerol(out). Its function is as follows. Lipid transferase specifically expressed in white adipose tissue, which promotes unilocular lipid droplet formation by mediating lipid droplet fusion. Lipid droplet fusion promotes their enlargement, restricting lipolysis and favoring lipid storage. Localizes on the lipid droplet surface, at focal contact sites between lipid droplets, and mediates atypical lipid droplet fusion by undergoing liquid-liquid phase separation (LLPS) and promoting directional net neutral lipid transfer from the smaller to larger lipid droplets. The transfer direction may be driven by the internal pressure difference between the contacting lipid droplet pair. Its role in neutral lipid transfer and lipid droplet enlargement is activated by the interaction with PLIN1. May also act as a CEBPB coactivator in the white adipose tissue to control the expression of a subset of CEBPB downstream target genes, including SOCS1, SOCS3, TGFB1, TGFBR1, ID2 and XDH. When overexpressed in preadipocytes, induces apoptosis or increases cell susceptibility to apoptosis induced by serum deprivation or TGFB treatment. The chain is Lipid transferase CIDEC from Mus musculus (Mouse).